Consider the following 65-residue polypeptide: Large ribosomal subunit protein bL35 (65 aa).

Positions 1–16 are enriched in basic residues; the sequence is MPKMKTKSGAKKRFRV. The interval 1-25 is disordered; the sequence is MPKMKTKSGAKKRFRVRPGGTVKRG.

The protein belongs to the bacterial ribosomal protein bL35 family.

In Herminiimonas arsenicoxydans, this protein is Large ribosomal subunit protein bL35.